A 260-amino-acid chain; its full sequence is Histone H2A.v1 (260 aa).

Disordered regions lie at residues 65-122 and 236-260; these read VVQT…KQKS and KKKG…SSKN. A compositionally biased stretch (low complexity) spans 67–110; sequence QTNNKTNNKNNINNNNNNNNNNNNNNINNNNKNNKVKKTTTTTK. Basic and acidic residues-rich tracts occupy residues 111-121 and 248-260; these read KNNEKSNEKQK and DISK…SSKN.

It belongs to the histone H2A family.

The chain is Histone H2A.v1 (H2Av1) from Dictyostelium discoideum (Social amoeba).